The following is a 351-amino-acid chain: Calcium uniporter protein, mitochondrial (351 aa).

The transit peptide at 1–50 (MAAAAGRSLLLLLSSRGGGGGGAGGCGALTAGCFPGLGVSRHRQQQHHRT) directs the protein to the mitochondrion. At 51–233 (VHQRIASWQN…ISRKAEKRTT (183 aa)) the chain is on the mitochondrial matrix side. 2 positions are modified to phosphoserine; by CaMK2: Ser57 and Ser92. The segment at 75–165 (VTVVYQNGLP…LTYHVRPPKR (91 aa)) is N-terminal MCU domain. An S-glutathionyl cysteine modification is found at Cys97. Residues 192–223 (IEQHQLNKERELIERLEDLKEQLAPLEKVRIE) adopt a coiled-coil conformation. A helical membrane pass occupies residues 234 to 255 (LVLWGGLAYMATQFGILARLTW). The Mitochondrial intermembrane segment spans residues 256–262 (WEYSWDI). The Selectivity filter motif lies at 260–268 (WDIMEPVTY). A helical transmembrane segment spans residues 263–284 (MEPVTYFITYGSAMAMYAYFVM). Ca(2+) is bound at residue Glu264. The tract at residues 285 to 290 (TRQEYV) is juxtamembrane helix. The Mitochondrial matrix portion of the chain corresponds to 285-351 (TRQEYVYPEA…LPLRQIGEKD (67 aa)). Positions 311–339 (RFDLEKYNQLKDAIAQAEMDLKRLRDPLQ) form a coiled coil. Lys332 is subject to N6-acetyllysine.

The protein belongs to the MCU (TC 1.A.77) family. Homotetramer. Component of the uniplex complex, composed of MCU, EMRE/SMDT1, MICU1 and MICU2 (or MICU3) in a 4:4:1:1 stoichiometry. Interacts with CCDC109B/MCUB; this inhibits channel activity. Interacts with MCUR1. Interactions with MICU1 and MCUR1 are mutually exclusive. Interacts with SLC25A23. In terms of processing, phosphorylation by CaMK2 in heart leads to increased MCU current. The regulation of MCU by CaMK2 is however subject to discussion: another group was unable to reproduce these results. Phosphorylated on tyrosines by PTK2B/PYK2, promoting oligomerization. Glutathionylation at Cys-97 in response to reactive oxygen species (ROS) promotes MCU higher-order assembly, leading to constitutive activation of the MCU channel and mitochondrial calcium overload. Post-translationally, undergoes proteolytic degradation by SPG7.

The protein localises to the mitochondrion inner membrane. It carries out the reaction Ca(2+)(in) = Ca(2+)(out). Its activity is regulated as follows. MCU channel activity is regulated by the heterodimer composed of MICU1 and either MICU2 or MICU3, which act as calcium-sensors. At low calcium levels, MICU1 occludes the pore of the MCU channel, preventing mitochondrial calcium uptake. At higher calcium levels, calcium-binding to MICU1 and MICU2 (or MICU3) induces a conformational change that weakens MCU-MICU1 interactions and moves the MICU1-MICU2 heterodimer away from the pore, allowing calcium permeation through the channel. MCU channel activity is gated by EMRE/SMDT1 via the juxtamembrane helix loop. Inhibited by ruthenium red or its derivative Ru360. Its function is as follows. Channel-forming and calcium-conducting subunit of the mitochondrial inner membrane calcium uniporter complex (uniplex), which mediates calcium uptake into the mitochondrial matrix. MCU channel activity is regulated by the calcium-sensor subunits of the uniplex MICU1 and MICU2 (or MICU3). Mitochondrial calcium homeostasis plays key roles in cellular physiology and regulates ATP production, cytoplasmic calcium signals and activation of cell death pathways. Involved in buffering the amplitude of systolic calcium rises in cardiomyocytes. While dispensable for baseline homeostatic cardiac function, acts as a key regulator of short-term mitochondrial calcium loading underlying a 'fight-or-flight' response during acute stress: acts by mediating a rapid increase of mitochondrial calcium in pacemaker cells. Participates in mitochondrial permeability transition during ischemia-reperfusion injury. Mitochondrial calcium uptake in skeletal muscle cells is involved in muscle size in adults. Regulates synaptic vesicle endocytosis kinetics in central nerve terminal. Regulates glucose-dependent insulin secretion in pancreatic beta-cells by regulating mitochondrial calcium uptake. Involved in antigen processing and presentation. This chain is Calcium uniporter protein, mitochondrial, found in Homo sapiens (Human).